The primary structure comprises 289 residues: 33 kDa chaperonin (289 aa).

2 disulfide bridges follow: C229-C231 and C262-C265.

It belongs to the HSP33 family. In terms of processing, under oxidizing conditions two disulfide bonds are formed involving the reactive cysteines. Under reducing conditions zinc is bound to the reactive cysteines and the protein is inactive.

The protein resides in the cytoplasm. Functionally, redox regulated molecular chaperone. Protects both thermally unfolding and oxidatively damaged proteins from irreversible aggregation. Plays an important role in the bacterial defense system toward oxidative stress. The protein is 33 kDa chaperonin of Pectobacterium atrosepticum (strain SCRI 1043 / ATCC BAA-672) (Erwinia carotovora subsp. atroseptica).